The primary structure comprises 444 residues: GTPase Der (444 aa).

EngA-type G domains follow at residues 3 to 167 (PIVA…PEAE) and 180 to 353 (LRLA…AECQ). GTP is bound by residues 9 to 16 (GRPNVGKS), 56 to 60 (DTGGM), 119 to 122 (NKVD), 186 to 193 (GRPNAGKS), 233 to 237 (DTAGV), and 298 to 301 (NKTD). Positions 354-438 (IRIGTGELNR…PVKVVCRASH (85 aa)) constitute a KH-like domain.

This sequence belongs to the TRAFAC class TrmE-Era-EngA-EngB-Septin-like GTPase superfamily. EngA (Der) GTPase family. As to quaternary structure, associates with the 50S ribosomal subunit.

In terms of biological role, GTPase that plays an essential role in the late steps of ribosome biogenesis. This is GTPase Der from Solidesulfovibrio magneticus (strain ATCC 700980 / DSM 13731 / RS-1) (Desulfovibrio magneticus).